A 210-amino-acid polypeptide reads, in one-letter code: Endo-1,4-beta-xylanase A (210 aa).

The N-terminal stretch at 1-19 is a signal peptide; it reads MKLKKKMLTLLLTASMSFG. Residues 20–210 form the GH11 domain; sequence LFGATSSAAT…SSGRSNVTVW (191 aa). E104 functions as the Nucleophile in the catalytic mechanism. E197 (proton donor) is an active-site residue.

It belongs to the glycosyl hydrolase 11 (cellulase G) family.

The catalysed reaction is Endohydrolysis of (1-&gt;4)-beta-D-xylosidic linkages in xylans.. Its pathway is glycan degradation; xylan degradation. The sequence is that of Endo-1,4-beta-xylanase A (xynA) from Geobacillus stearothermophilus (Bacillus stearothermophilus).